The sequence spans 614 residues: Lamin-2 (614 aa).

The span at 1–10 (MSAQVSKKRG) shows a compositional bias: basic residues. The segment at 1 to 51 (MSAQVSKKRGGSNPPKTGQHAASSTTSRTESSATSQTIYERQEVETRTQRT) is disordered. The tract at residues 1–76 (MSAQVSKKRG…GTAGLAGSPL (76 aa)) is head. The span at 21-37 (AASSTTSRTESSATSQT) shows a compositional bias: low complexity. The interval 77 to 117 (SRHQEKEEFKLLNNRFANYIDTIRAQQEEISVLRRKVETVS) is coil 1A. One can recognise an IF rod domain in the interval 81-433 (EKEEFKLLNN…ALLRTEEERL (353 aa)). The linker 1 stretch occupies residues 118 to 128 (SKEVVENQKIK). The coil 1B stretch occupies residues 129–268 (ERYNLEIANL…EEIVSLRNQR (140 aa)). The interval 269 to 286 (RTEITEVETRMGEEYQSK) is linker 2. A coil 2 region spans residues 287–426 (IVEQLNDLRA…AELATYNALL (140 aa)). The tail stretch occupies residues 427 to 611 (RTEEERLNMK…ADSSDHQKNC (185 aa)). Positions 433–454 (LNMKSPPFPSTPDSQRRGTKRR) are disordered. Residues 449–458 (RGTKRRIADS) carry the Nuclear localization signal motif. Positions 462 to 581 (TRFRNEASAT…VARREMTQSS (120 aa)) constitute an LTD domain. Cysteine 611 carries the S-farnesyl cysteine lipid modification. Residues 612–614 (VIM) constitute a propeptide, removed in mature form.

Belongs to the intermediate filament family.

Its subcellular location is the nucleus inner membrane. In terms of biological role, intermediate filament (IF) protein, component of the nuclear lamina, a fibrous layer on the nucleoplasmic side of the inner nuclear membrane, which is thought to provide a framework for the nuclear envelope. In Hypsibius exemplaris (Freshwater tardigrade), this protein is Lamin-2.